The following is a 200-amino-acid chain: Recombination protein RecR (200 aa).

The segment at 57–72 (CSHCRTFTENERCEIC) adopts a C4-type zinc-finger fold. The region spanning 81 to 176 (GLLCVVESPA…KVSRIAHGVP (96 aa)) is the Toprim domain.

Belongs to the RecR family.

Functionally, may play a role in DNA repair. It seems to be involved in an RecBC-independent recombinational process of DNA repair. It may act with RecF and RecO. In Aeromonas hydrophila subsp. hydrophila (strain ATCC 7966 / DSM 30187 / BCRC 13018 / CCUG 14551 / JCM 1027 / KCTC 2358 / NCIMB 9240 / NCTC 8049), this protein is Recombination protein RecR.